The following is a 102-amino-acid chain: Putative peripheral benzodiazepine receptor-related protein (102 aa).

Ubiquitous.

This is Putative peripheral benzodiazepine receptor-related protein (TSPO) from Homo sapiens (Human).